The following is a 240-amino-acid chain: 1-(5-phosphoribosyl)-5-[(5-phosphoribosylamino)methylideneamino] imidazole-4-carboxamide isomerase (240 aa).

Catalysis depends on Asp8, which acts as the Proton acceptor. Catalysis depends on Asp129, which acts as the Proton donor.

It belongs to the HisA/HisF family.

The protein localises to the cytoplasm. It carries out the reaction 1-(5-phospho-beta-D-ribosyl)-5-[(5-phospho-beta-D-ribosylamino)methylideneamino]imidazole-4-carboxamide = 5-[(5-phospho-1-deoxy-D-ribulos-1-ylimino)methylamino]-1-(5-phospho-beta-D-ribosyl)imidazole-4-carboxamide. It functions in the pathway amino-acid biosynthesis; L-histidine biosynthesis; L-histidine from 5-phospho-alpha-D-ribose 1-diphosphate: step 4/9. The protein is 1-(5-phosphoribosyl)-5-[(5-phosphoribosylamino)methylideneamino] imidazole-4-carboxamide isomerase of Listeria monocytogenes serotype 4a (strain HCC23).